We begin with the raw amino-acid sequence, 395 residues long: F-box/kelch-repeat protein At4g39570 (395 aa).

The segment covering 1–25 has biased composition (basic residues); the sequence is MSSPERKRKRVTSTKNPSVKKKKKI. A disordered region spans residues 1–29; that stretch reads MSSPERKRKRVTSTKNPSVKKKKKISPVP. Positions 29–75 constitute an F-box domain; sequence PTPIPSLPDDLLVSIFARVSRLYYPILSLVSKSFRSLLRSPELYETR. 2 Kelch repeats span residues 150-197 and 198-246; these read DIYF…VIDG and KIYV…RSAY.

This Arabidopsis thaliana (Mouse-ear cress) protein is F-box/kelch-repeat protein At4g39570.